The sequence spans 441 residues: Glutamate-1-semialdehyde 2,1-aminomutase (441 aa).

Lys275 is subject to N6-(pyridoxal phosphate)lysine.

It belongs to the class-III pyridoxal-phosphate-dependent aminotransferase family. HemL subfamily. As to quaternary structure, homodimer. Pyridoxal 5'-phosphate serves as cofactor.

Its subcellular location is the cytoplasm. It catalyses the reaction (S)-4-amino-5-oxopentanoate = 5-aminolevulinate. It participates in porphyrin-containing compound metabolism; protoporphyrin-IX biosynthesis; 5-aminolevulinate from L-glutamyl-tRNA(Glu): step 2/2. The sequence is that of Glutamate-1-semialdehyde 2,1-aminomutase from Deinococcus deserti (strain DSM 17065 / CIP 109153 / LMG 22923 / VCD115).